The primary structure comprises 198 residues: Beta-crystallin A1 (198 aa).

The tract at residues 1 to 13 is N-terminal arm; that stretch reads MLYLVLFLVPFNS. 2 Beta/gamma crystallin 'Greek key' domains span residues 14-53 and 54-100; these read IQIT…KVEC and GAWI…RPIC. S-glutathionyl cysteine; alternate is present on residues Cys-65 and Cys-100. Cys-65 and Cys-100 each carry S-methylcysteine; alternate. The tract at residues 101–106 is connecting peptide; that stretch reads SANHKE. Beta/gamma crystallin 'Greek key' domains are found at residues 107–148 and 149–197; these read SKIT…KIQC and GAWV…RRIQ.

This sequence belongs to the beta/gamma-crystallin family. In terms of assembly, homo/heterodimer, or complexes of higher-order. The structure of beta-crystallin oligomers seems to be stabilized through interactions between the N-terminal arms. Interacts with CRYBA1.

Crystallins are the dominant structural components of the vertebrate eye lens. The protein is Beta-crystallin A1 of Mus musculus (Mouse).